Reading from the N-terminus, the 315-residue chain is Neuroguidin (315 aa).

An N-acetylalanine modification is found at Ala2. The stretch at 7-41 (LESDVSSSITLLKNLQEQVMAVTAQIQALTTKVRA) forms a coiled coil. Residues 41–174 (AGTYSTEKGL…KGSAKKYVPP (134 aa)) are necessary for interaction with EIF4E. Phosphoserine is present on residues Ser121, Ser142, and Ser143. The interval 123–190 (SENDPLRFKP…YDETEAEREQ (68 aa)) is disordered. Over residues 144 to 155 (EDEEESEAEEGQ) the composition is skewed to acidic residues. The span at 180–190 (HYDETEAEREQ) shows a compositional bias: basic and acidic residues. Residues 181–203 (YDETEAEREQKRLEKAKRRALSS) are a coiled coil. Residues Ser204 and Ser214 each carry the phosphoserine modification. Basic and acidic residues-rich tracts occupy residues 212–225 (QYSD…DARH) and 232–241 (SQEDQHRVNY). Disordered stretches follow at residues 212–243 (QYSD…NYEE) and 284–315 (GTAH…RRRW). Residues 295–315 (VKKRKKLPKKGRKKKGFRRRW) show a composition bias toward basic residues.

Belongs to the SAS10 family. In terms of assembly, interacts with CPEB1 and EIF4E. Expressed in testis, ovary, spleen, kidney, hippocampus and cerebellum (at protein level). Expressed in testis, ovary, spleen, kidney, brain.

The protein resides in the nucleus. Its subcellular location is the nucleolus. It is found in the chromosome. It localises to the centromere. The protein localises to the cytoplasm. The protein resides in the cell projection. Its subcellular location is the axon. It is found in the dendrite. It localises to the filopodium. Functionally, part of the small subunit (SSU) processome, first precursor of the small eukaryotic ribosomal subunit. During the assembly of the SSU processome in the nucleolus, many ribosome biogenesis factors, an RNA chaperone and ribosomal proteins associate with the nascent pre-rRNA and work in concert to generate RNA folding, modifications, rearrangements and cleavage as well as targeted degradation of pre-ribosomal RNA by the RNA exosome. Its dissociation from the complex determines the transition from state pre-A1 to state pre-A1*. Inhibits mRNA translation in a cytoplasmic polyadenylation element (CPE)-dependent manner. This Mus musculus (Mouse) protein is Neuroguidin (Ngdn).